Here is a 313-residue protein sequence, read N- to C-terminus: Proline iminopeptidase (313 aa).

The region spanning 35 to 298 (KPVVILHGGP…TPGAGHSAFE (264 aa)) is the AB hydrolase-1 domain. Ser110 acts as the Nucleophile in catalysis. Residue Asp266 is part of the active site. His294 acts as the Proton donor in catalysis.

It belongs to the peptidase S33 family.

The protein resides in the cytoplasm. The catalysed reaction is Release of N-terminal proline from a peptide.. Functionally, specifically catalyzes the removal of N-terminal proline residues from peptides. The protein is Proline iminopeptidase (pip) of Xylella fastidiosa (strain Temecula1 / ATCC 700964).